Here is a 33-residue protein sequence, read N- to C-terminus: Neutrophil defensin 4 (33 aa).

Cystine bridges form between Cys-3–Cys-31, Cys-5–Cys-20, and Cys-10–Cys-30.

Belongs to the alpha-defensin family. Post-translationally, HANP-2 could be a product of proteolytic N-terminal amino acid removal from HANP-4.

Its subcellular location is the secreted. Bactericidal activity, greater against Gram-positive bacteria. Low anti-fungi activity. The polypeptide is Neutrophil defensin 4 (Mesocricetus auratus (Golden hamster)).